Reading from the N-terminus, the 186-residue chain is TATA-box-binding protein 2 (186 aa).

2 tandem repeats follow at residues 10–86 (IQNV…FDKL) and 101–179 (VQNI…VERI). Glycyl lysine isopeptide (Lys-Gly) (interchain with G-Cter in SAMP2) cross-links involve residues lysine 53 and lysine 63.

This sequence belongs to the TBP family.

General factor that plays a role in the activation of archaeal genes transcribed by RNA polymerase. Binds specifically to the TATA box promoter element which lies close to the position of transcription initiation. This Haloferax volcanii (strain ATCC 29605 / DSM 3757 / JCM 8879 / NBRC 14742 / NCIMB 2012 / VKM B-1768 / DS2) (Halobacterium volcanii) protein is TATA-box-binding protein 2 (tbp2).